Here is a 644-residue protein sequence, read N- to C-terminus: Sodium/potassium/calcium exchanger 3 (644 aa).

An N-terminal signal peptide occupies residues 1-44; sequence MRPSGDEDRARRRRRRRRRRDLLLSQLCFLASVALLLWSLSSLR. The Extracellular portion of the chain corresponds to 45–107; sequence EQKELDLMDL…DIFTNEDRRQ (63 aa). Residues asparagine 71 and asparagine 86 are each glycosylated (N-linked (GlcNAc...) asparagine). The helical transmembrane segment at 108-128 threads the bilayer; it reads GAVVLHVLCAIYMFYALAIVC. Residues 129–153 lie on the Cytoplasmic side of the membrane; it reads DDFFVPSLEKICERLHLSEDVAGAT. Residues 149–189 form an Alpha-1 repeat; that stretch reads VAGATFMAAGSSAPELFTSVIGVFITKGDVGVGTIVGSAVF. The chain crosses the membrane as a helical span at residues 154–174; sequence FMAAGSSAPELFTSVIGVFIT. The Extracellular segment spans residues 175–182; the sequence is KGDVGVGT. A helical transmembrane segment spans residues 183-203; sequence IVGSAVFNILCIIGVCGLFAG. At 204–210 the chain is on the cytoplasmic side; the sequence is QVVALSS. Residues 211-231 traverse the membrane as a helical segment; it reads WCLLRDSIYYTLSVIALIVFI. Topologically, residues 232 to 234 are extracellular; that stretch reads YDE. Residues 235-255 form a helical membrane-spanning segment; that stretch reads KVSWWESLVLVLMYLIYIVIM. Over 256-484 the chain is Cytoplasmic; the sequence is KYNACIHQCF…WFMVTFASST (229 aa). The residue at position 308 (serine 308) is a Phosphoserine. The segment at 405-442 is disordered; it reads AEAGNETENENEDNENDEEEEEDEDDDEGPYTPFDTPS. Positions 409–433 are enriched in acidic residues; sequence NETENENEDNENDEEEEEDEDDDEG. A helical membrane pass occupies residues 485–505; it reads LWIAAFSYMMVWMVTIIGYTL. At 506-510 the chain is on the extracellular side; that stretch reads GIPDV. The chain crosses the membrane as a helical span at residues 511–531; the sequence is IMGITFLAAGTSVPDCMASLI. The Alpha-2 repeat unit spans residues 518 to 549; that stretch reads AAGTSVPDCMASLIVARQGMGDMAVSNSIGSN. Topologically, residues 532-549 are cytoplasmic; sequence VARQGMGDMAVSNSIGSN. The helical transmembrane segment at 550 to 570 threads the bilayer; it reads VFDILIGLGLPWALQTLAVDY. At 571–580 the chain is on the extracellular side; sequence GSYIRLNSRG. A helical transmembrane segment spans residues 581-601; sequence LIYSVGLLLASVFVTVFGVHL. The Cytoplasmic portion of the chain corresponds to 602 to 615; the sequence is NKWQLDKKLGCGCL. The helical transmembrane segment at 616-636 threads the bilayer; that stretch reads LLYGVFLCFSIMTEFNVFTFV. At 637-644 the chain is on the extracellular side; that stretch reads NLPMCGDH.

The protein belongs to the Ca(2+):cation antiporter (CaCA) (TC 2.A.19) family. SLC24A subfamily. In terms of tissue distribution, abundant in the brain. Expressed at low levels in the aorta, uterus and intestine.

It is found in the cell membrane. The enzyme catalyses Ca(2+)(out) + K(+)(out) + 4 Na(+)(in) = Ca(2+)(in) + K(+)(in) + 4 Na(+)(out). Calcium, potassium:sodium antiporter that transports 1 Ca(2+) and 1 K(+) in exchange for 4 Na(+). The protein is Sodium/potassium/calcium exchanger 3 (SLC24A3) of Homo sapiens (Human).